The chain runs to 497 residues: Ankyrin repeat domain-containing protein 53 (497 aa).

The span at Met1 to Lys10 shows a compositional bias: basic residues. A disordered region spans residues Met1–Gln65. Over residues Ser12–Ser27 the composition is skewed to low complexity. A compositionally biased stretch (basic and acidic residues) spans Asp28–Pro39. ANK repeat units follow at residues Lys110 to Leu140, Lys144 to Ser177, and Asn181 to Ala210. Residues Trp239 to Glu264 adopt a coiled-coil conformation.

In terms of assembly, interacts with PSRC1; recruited by PSRC1 to the spindle during mitosis. In terms of processing, phosphorylated during mitosis.

The protein localises to the cytoplasm. Its subcellular location is the cytoskeleton. The protein resides in the spindle. It localises to the spindle pole. In terms of biological role, required for normal progression through mitosis. Involved in chromosome alignment and cytokinesis via regulation of microtubules polymerization. This chain is Ankyrin repeat domain-containing protein 53 (Ankrd53), found in Mus musculus (Mouse).